The following is a 374-amino-acid chain: MRDPAPSDTSKKRVIVGMSGGVDSSVSALLLIEQGYEVEGLFMKNWEEDDGTEYCTAMDDLADAQAVCDKIGIKLHTANFAAEYWDNVFEHFLAEYKAGRTPNPDILCNREIKFKAFLDYAMMLGADLIATGHYVRRRDIDGRTELLKGLDPNKDQSYFLHAVGGEQIAKTLFPVGELEKPEVRAIAEKYELATAKKKDSTGICFIGERRFSDFLKQYLPAQPGEIKTTEGEVIGRHHGLMYHTIGQRQGLGIGGLKDAGDEPWYVLRKDLDTNELIVGQGNNHPWLFSSALLASEIYWVNPIDLSQPLRLTAKVRYRQSDQACTLEKTDTGYRAVFDEPQRAVTPGQSVVFYDGEICLGGGVIEVAEPWSGQA.

Residues 17-24 (GMSGGVDS) and M43 each bind ATP. Residues 103–105 (NPD) are interaction with target base in tRNA. Catalysis depends on C108, which acts as the Nucleophile. Residues C108 and C204 are joined by a disulfide bond. G132 lines the ATP pocket. Residues 154-156 (KDQ) are interaction with tRNA. C204 serves as the catalytic Cysteine persulfide intermediate. The tract at residues 316 to 317 (RY) is interaction with tRNA.

It belongs to the MnmA/TRMU family.

The protein resides in the cytoplasm. The catalysed reaction is S-sulfanyl-L-cysteinyl-[protein] + uridine(34) in tRNA + AH2 + ATP = 2-thiouridine(34) in tRNA + L-cysteinyl-[protein] + A + AMP + diphosphate + H(+). Functionally, catalyzes the 2-thiolation of uridine at the wobble position (U34) of tRNA, leading to the formation of s(2)U34. The sequence is that of tRNA-specific 2-thiouridylase MnmA from Pseudomonas fluorescens (strain Pf0-1).